The chain runs to 379 residues: Succinyl-diaminopimelate desuccinylase (379 aa).

Position 68 (histidine 68) interacts with Zn(2+). Aspartate 70 is an active-site residue. Aspartate 101 is a Zn(2+) binding site. Glutamate 135 (proton acceptor) is an active-site residue. The Zn(2+) site is built by glutamate 136, glutamate 164, and histidine 350.

The protein belongs to the peptidase M20A family. DapE subfamily. As to quaternary structure, homodimer. Requires Zn(2+) as cofactor. Co(2+) is required as a cofactor.

The catalysed reaction is N-succinyl-(2S,6S)-2,6-diaminopimelate + H2O = (2S,6S)-2,6-diaminopimelate + succinate. The protein operates within amino-acid biosynthesis; L-lysine biosynthesis via DAP pathway; LL-2,6-diaminopimelate from (S)-tetrahydrodipicolinate (succinylase route): step 3/3. Its function is as follows. Catalyzes the hydrolysis of N-succinyl-L,L-diaminopimelic acid (SDAP), forming succinate and LL-2,6-diaminopimelate (DAP), an intermediate involved in the bacterial biosynthesis of lysine and meso-diaminopimelic acid, an essential component of bacterial cell walls. In Bordetella parapertussis (strain 12822 / ATCC BAA-587 / NCTC 13253), this protein is Succinyl-diaminopimelate desuccinylase.